Reading from the N-terminus, the 72-residue chain is UPF0154 protein LBA1278 (72 aa).

A helical transmembrane segment spans residues 3 to 23 (LGLAIFLIIIALLVGATAGFY).

Belongs to the UPF0154 family.

Its subcellular location is the cell membrane. The protein is UPF0154 protein LBA1278 of Lactobacillus acidophilus (strain ATCC 700396 / NCK56 / N2 / NCFM).